The following is a 319-amino-acid chain: Serpentine receptor class X-43 (319 aa).

7 helical membrane-spanning segments follow: residues 28–48 (VVSM…IGCF), 67–87 (AQLM…LLNI), 95–115 (YLFG…FLLM), 138–158 (IRTF…YLVV), 164–184 (FVFY…CGTL), 194–214 (TVLS…LMAF), and 267–287 (FFFT…VVVF).

This sequence belongs to the G-protein coupled receptor 1 family. Expressed in ASI sensory neurons.

It localises to the cell membrane. The protein localises to the perikaryon. The protein resides in the cell projection. It is found in the cilium. Receptor for the ascaroside pheromone icas#9 which suppresses exploratory forgaging behavior. In response to ascaroside icas#9, may furthermore play a role in the expression of genes in the TGF-beta signaling pathway, such as daf-7, and in insulin signaling pathway, such as daf-28, which may in turn contribute to exploratory behavior. The sequence is that of Serpentine receptor class X-43 from Caenorhabditis elegans.